The following is a 444-amino-acid chain: Acetyl-CoA--deacetylcephalosporin C acetyltransferase (444 aa).

The propeptide occupies 1 to 71 (MLPSAQVARL…PQIANRFEAS (71 aa)). An AB hydrolase-1 domain is found at 112 to 425 (VIVCHTLTSS…DTNEGHDFFV (314 aa)). Residues Ser-208 and His-421 contribute to the active site.

The protein belongs to the AB hydrolase superfamily. MetX family. In terms of assembly, heterodimer of chain I and chain II.

It carries out the reaction deacetylcephalosporin C + acetyl-CoA = cephalosporin C + CoA. The protein operates within antibiotic biosynthesis; cephalosporin C biosynthesis. Its function is as follows. Catalyzes the conversion of deacetylcephalosporin C to cephalosporin C. The chain is Acetyl-CoA--deacetylcephalosporin C acetyltransferase (CEFG) from Hapsidospora chrysogena (Acremonium chrysogenum).